The following is a 226-amino-acid chain: ATP-dependent dethiobiotin synthetase BioD (226 aa).

12-17 (GVGKTV) is an ATP binding site. Residue T16 coordinates Mg(2+). The active site involves K37. T41 is a substrate binding site. ATP-binding positions include D49, 108–111 (EGAG), 169–170 (GS), and 197–199 (PAG). Positions 49 and 108 each coordinate Mg(2+).

The protein belongs to the dethiobiotin synthetase family. As to quaternary structure, homodimer. It depends on Mg(2+) as a cofactor.

Its subcellular location is the cytoplasm. The enzyme catalyses (7R,8S)-7,8-diammoniononanoate + CO2 + ATP = (4R,5S)-dethiobiotin + ADP + phosphate + 3 H(+). It functions in the pathway cofactor biosynthesis; biotin biosynthesis; biotin from 7,8-diaminononanoate: step 1/2. Catalyzes a mechanistically unusual reaction, the ATP-dependent insertion of CO2 between the N7 and N8 nitrogen atoms of 7,8-diaminopelargonic acid (DAPA, also called 7,8-diammoniononanoate) to form a ureido ring. The polypeptide is ATP-dependent dethiobiotin synthetase BioD (Mycobacterium tuberculosis (strain ATCC 25177 / H37Ra)).